We begin with the raw amino-acid sequence, 415 residues long: 8-amino-7-oxononanoate synthase (415 aa).

R21 is a binding site for substrate. Residue 117–118 coordinates pyridoxal 5'-phosphate; it reads GY. H149 lines the substrate pocket. Pyridoxal 5'-phosphate is bound by residues S195, H223, and T251. N6-(pyridoxal phosphate)lysine is present on K254. Residue T374 participates in substrate binding.

Belongs to the class-II pyridoxal-phosphate-dependent aminotransferase family. BioF subfamily. As to quaternary structure, homodimer. Requires pyridoxal 5'-phosphate as cofactor.

The catalysed reaction is 6-carboxyhexanoyl-[ACP] + L-alanine + H(+) = (8S)-8-amino-7-oxononanoate + holo-[ACP] + CO2. The protein operates within cofactor biosynthesis; biotin biosynthesis. Functionally, catalyzes the decarboxylative condensation of pimeloyl-[acyl-carrier protein] and L-alanine to produce 8-amino-7-oxononanoate (AON), [acyl-carrier protein], and carbon dioxide. This Ralstonia pickettii (strain 12J) protein is 8-amino-7-oxononanoate synthase.